Reading from the N-terminus, the 446-residue chain is tRNA(Ile2) 2-agmatinylcytidine synthetase TiaS (446 aa).

Belongs to the TiaS family.

The protein localises to the cytoplasm. It catalyses the reaction cytidine(34) in tRNA(Ile2) + agmatine + ATP + H2O = 2-agmatinylcytidine(34) in tRNA(Ile2) + AMP + 2 phosphate + 2 H(+). Functionally, ATP-dependent agmatine transferase that catalyzes the formation of 2-agmatinylcytidine (agm2C) at the wobble position (C34) of tRNA(Ile2), converting the codon specificity from AUG to AUA. The chain is tRNA(Ile2) 2-agmatinylcytidine synthetase TiaS from Cenarchaeum symbiosum (strain A).